Reading from the N-terminus, the 302-residue chain is Meiotic recombination protein rec14 (302 aa).

WD repeat units follow at residues 14-51 (AHQA…HSLV), 57-96 (PHKL…FRDL), 101-140 (QHPS…KISE), 142-184 (DTKG…HVLS), 185-226 (GHTS…GQLR), 227-266 (GHAA…CIST), and 269-302 (ETDG…AATE).

As to quaternary structure, component of the DSB catalytic core (DSBC) complex, composed of at least rec12, rec6 and rec14. The complex interacts with mde2.

Its function is as follows. Required for formation of the rec12-mediated double-strand breaks (DSBs) that initiate meiotic recombination. This is Meiotic recombination protein rec14 from Schizosaccharomyces pombe (strain 972 / ATCC 24843) (Fission yeast).